Consider the following 681-residue polypeptide: Sodium-dependent phosphate transporter 1 (681 aa).

Helical transmembrane passes span 25-45 (YLWMLILGFIIAFVLAFSVGA), 66-86 (ACILASIFETVGSVLLGAKVS), 106-126 (LMAGSVSAMFGSAVWQLVASF), 162-182 (IVMSWFISPLLSGIMSGILFF), 207-227 (ACTVGINLFSIMYTGAPLLGF), and 234-254 (GTILISVGCAVFCALIVWFFV). Phosphoserine is present on residues Ser269 and Ser273. The interval 269 to 296 (SPSESPLMEKKNSLKEDHEETKLSVSDI) is disordered. Positions 275–290 (LMEKKNSLKEDHEETK) are enriched in basic and acidic residues. 4 consecutive transmembrane segments (helical) span residues 515–535 (VSLLFQFLQILTACFGSFAHG), 562–582 (VATPIWLLLYGGVGICIGLWV), 604–624 (FSIELASALTVVIASNIGLPI), and 654–674 (IFMAWFVTVPISGVISAAIMA). An a region spans residues 554 to 562 (DTGDVSSKV).

This sequence belongs to the inorganic phosphate transporter (PiT) (TC 2.A.20) family.

Its subcellular location is the cell membrane. It carries out the reaction 2 Na(+)(out) + phosphate(out) = 2 Na(+)(in) + phosphate(in). Its function is as follows. Sodium-phosphate symporter which preferentially transports the monovalent form of phosphate with a stoichiometry of two sodium ions per phosphate ion. May play a role in extracellular matrix and cartilage calcification as well as in vascular calcification. Essential for cell proliferation but this function is independent of its phosphate transporter activity. This chain is Sodium-dependent phosphate transporter 1 (Slc20a1), found in Felis catus (Cat).